Reading from the N-terminus, the 275-residue chain is Voltage-dependent calcium channel gamma-5 subunit (275 aa).

4 consecutive transmembrane segments (helical) span residues 8-28 (ALTL…GIAV), 103-123 (FPLV…IGHI), 129-149 (ILAF…VVGL), and 176-196 (GWSF…GVMS).

It belongs to the PMP-22/EMP/MP20 family. CACNG subfamily. The L-type calcium channel is composed of five subunits: alpha-1, alpha-2/delta, beta and gamma. Acts as an auxiliary subunit for AMPA-selective glutamate receptors (AMPARs). Found in a complex with GRIA1, GRIA2, GRIA3, GRIA4, CNIH2, CNIH3, CACNG2, CACNG3, CACNG4, CACNG7 and CACNG8. Interacts with GRIA1, GRIA2, GRIA3 and GRIA4.

Its subcellular location is the membrane. It localises to the postsynaptic density membrane. Regulates the gating properties of AMPA-selective glutamate receptors (AMPARs). Modulates their gating properties by accelerating their rates of activation, deactivation and desensitization. Displays subunit-specific AMPA receptor regulation. Shows specificity for GRIA1, GRIA4 and the long isoform of GRIA2. Thought to stabilize the calcium channel in an inactivated (closed) state. The polypeptide is Voltage-dependent calcium channel gamma-5 subunit (CACNG5) (Homo sapiens (Human)).